The sequence spans 598 residues: Trichothecene efflux pump TRI12 (598 aa).

A helical transmembrane segment spans residues 42-62 (IVASFAAFSMNVVATYFVLQA). Asn79 carries an N-linked (GlcNAc...) asparagine glycan. A run of 2 helical transmembrane segments spans residues 109–129 (PFVI…CTAT) and 135–155 (LAAM…PLFI). N-linked (GlcNAc...) asparagine glycosylation occurs at Asn161. The next 10 membrane-spanning stretches (helical) occupy residues 165 to 185 (FLGL…SPYL), 197 to 217 (WIFY…IIWY), 241 to 261 (WIGI…VSWG), 273 to 293 (VIGL…YEVY), 312 to 332 (FVCI…LVIM), 356 to 376 (ATAS…FHLV), 381 to 401 (WQIL…SSIN), 409 to 429 (IALS…TMLL), 442 to 462 (AFAV…AAFI), and 533 to 553 (ANVY…SLCM). The segment at 579 to 598 (LEGNSESQPSPIILSMADKE) is disordered.

Belongs to the major facilitator superfamily.

The protein resides in the cell membrane. Its function is as follows. Efflux pump that provides the dual role of trichothecene export and self-protection by allowing the fungus to evade the harmful effect of its own trichothecene production. In Fusarium sporotrichioides, this protein is Trichothecene efflux pump TRI12.